A 306-amino-acid polypeptide reads, in one-letter code: Armadillo repeat-containing protein 10 (306 aa).

The chain crosses the membrane as a helical span at residues 7–29 (VGWVAAGLVLGAGACYCIYRLTR). A Phosphoserine modification is found at Ser-43. Phosphothreonine is present on Thr-48. Residues 101–143 (GGIPIVGSKINSLNQSIKEKALNALNNLSVNVENQTKIKIYVR) form an ARM repeat.

Interacts with the DNA-binding domain of p53/TP53.

Its subcellular location is the endoplasmic reticulum membrane. The protein localises to the mitochondrion outer membrane. Functionally, may play a role in cell survival and cell growth. May suppress the transcriptional activity of p53/TP53. This Rattus norvegicus (Rat) protein is Armadillo repeat-containing protein 10 (Armc10).